We begin with the raw amino-acid sequence, 110 residues long: Holo-[acyl-carrier-protein] synthase (110 aa).

2 residues coordinate Mg(2+): D8 and E54.

Belongs to the P-Pant transferase superfamily. AcpS family. Requires Mg(2+) as cofactor.

It is found in the cytoplasm. It catalyses the reaction apo-[ACP] + CoA = holo-[ACP] + adenosine 3',5'-bisphosphate + H(+). In terms of biological role, transfers the 4'-phosphopantetheine moiety from coenzyme A to a Ser of acyl-carrier-protein. The chain is Holo-[acyl-carrier-protein] synthase from Mycoplasma capricolum subsp. capricolum (strain California kid / ATCC 27343 / NCTC 10154).